We begin with the raw amino-acid sequence, 152 residues long: SsrA-binding protein (152 aa).

This sequence belongs to the SmpB family.

The protein localises to the cytoplasm. Functionally, required for rescue of stalled ribosomes mediated by trans-translation. Binds to transfer-messenger RNA (tmRNA), required for stable association of tmRNA with ribosomes. tmRNA and SmpB together mimic tRNA shape, replacing the anticodon stem-loop with SmpB. tmRNA is encoded by the ssrA gene; the 2 termini fold to resemble tRNA(Ala) and it encodes a 'tag peptide', a short internal open reading frame. During trans-translation Ala-aminoacylated tmRNA acts like a tRNA, entering the A-site of stalled ribosomes, displacing the stalled mRNA. The ribosome then switches to translate the ORF on the tmRNA; the nascent peptide is terminated with the 'tag peptide' encoded by the tmRNA and targeted for degradation. The ribosome is freed to recommence translation, which seems to be the essential function of trans-translation. The polypeptide is SsrA-binding protein (Rickettsia bellii (strain RML369-C)).